Here is a 154-residue protein sequence, read N- to C-terminus: Lipoprotein signal peptidase (154 aa).

3 helical membrane-spanning segments follow: residues 4–24 (IIIPIITILLIALDQLSKLWI), 62–82 (LFTLITIFVVCVAIIYLMKHI), and 84–104 (GSYWLLISLTLIISGGLGNFI). Residues Asp-114 and Asp-130 contribute to the active site. The chain crosses the membrane as a helical span at residues 125 to 145 (IFNVADSYLTIGIICLMIALW).

This sequence belongs to the peptidase A8 family.

The protein resides in the cell membrane. It catalyses the reaction Release of signal peptides from bacterial membrane prolipoproteins. Hydrolyzes -Xaa-Yaa-Zaa-|-(S,diacylglyceryl)Cys-, in which Xaa is hydrophobic (preferably Leu), and Yaa (Ala or Ser) and Zaa (Gly or Ala) have small, neutral side chains.. The protein operates within protein modification; lipoprotein biosynthesis (signal peptide cleavage). In terms of biological role, this protein specifically catalyzes the removal of signal peptides from prolipoproteins. This chain is Lipoprotein signal peptidase, found in Streptococcus agalactiae serotype Ia (strain ATCC 27591 / A909 / CDC SS700).